We begin with the raw amino-acid sequence, 556 residues long: Probable glucomannan 4-beta-mannosyltransferase 3 (556 aa).

The chain crosses the membrane as a helical span at residues 56 to 76 (IFVFIPILKCLVTICLVMSLL). Asp159 is an active-site residue. The substrate site is built by Asp218 and Asp220. Asp312 is a catalytic residue. 4 helical membrane-spanning segments follow: residues 391-411 (IVVH…TVLF), 428-448 (ITIL…FWIL), 509-529 (LVVG…GGSY), and 530-550 (FYVY…GYIG).

It belongs to the glycosyltransferase 2 family. Plant cellulose synthase-like A subfamily.

It is found in the golgi apparatus membrane. The enzyme catalyses GDP-mannose + (glucomannan)n = GDP + (glucomannan)n+1.. Functionally, probable mannan synthase which consists of a 4-beta-mannosyltransferase activity on mannan using GDP-mannose. The beta-1,4-mannan product is the backbone for galactomannan synthesis by galactomannan galactosyltransferase. Galactomannan is a noncellulosic polysaccharides of plant cell wall. The sequence is that of Probable glucomannan 4-beta-mannosyltransferase 3 from Arabidopsis thaliana (Mouse-ear cress).